Reading from the N-terminus, the 1242-residue chain is Structural polyprotein (1242 aa).

The segment at 1–36 (MFPYPTLNYSPMAPVNPMAYRDPNPPRRRWRPFRPP) is necessary for nucleocapsid assembly and virus assembly. The interval 1–104 (MFPYPTLNYS…KQKPGKRQRM (104 aa)) is disordered. Residues 37–70 (LAAQIEDLRRSIANLTFKQRAPNPPAGPPAKRKK) are host transcription inhibition. Positions 44-51 (LRRSIANL) match the Supraphysiological nuclear export signal motif. Over residues 66–104 (AKRKKPAPKPKPAAPKKKRQPPPAKKQKRKQKPGKRQRM) the composition is skewed to basic residues. A Nuclear localization signal motif is present at residues 67–70 (KRKK). The tract at residues 83-113 (KRQPPPAKKQKRKQKPGKRQRMCMKLESDKT) is binding to the viral RNA. The ribosome-binding stretch occupies residues 98 to 112 (PGKRQRMCMKLESDK). Phosphoserine is present on serine 110. One can recognise a Peptidase S3 domain in the interval 112–261 (KTFPILLNGQ…KDTPEGSEPW (150 aa)). Threonine 113 is subject to Phosphothreonine. Catalysis depends on charge relay system residues histidine 138, aspartate 160, and serine 212. The interval 262–273 (SLTTVMCVLANI) is functions as an uncleaved signal peptide for the precursor of protein E3/E2. Asparagine 272 carries N-linked (GlcNAc...) asparagine; by host glycosylation. Over 325–688 (DLETHFTQYK…YYYNRYPMTT (364 aa)) the chain is Extracellular. The chain crosses the membrane as a helical span at residues 689–709 (IVGLCTCAAIIMVSCITSVWL). Residues 710 to 744 (LCRTRNLCITPYRLAPNAQVPILLAVLCCVKPTRA) are Cytoplasmic-facing. Residues cysteine 717, cysteine 737, and cysteine 738 are each lipidated (S-palmitoyl cysteine; by host). The tract at residues 717–737 (CITPYRLAPNAQVPILLAVLC) is transient transmembrane before p62-6K protein processing. Residues 745–759 (DDTLQVLNYLWNNNQ) lie on the Extracellular side of the membrane. Transmembrane regions (helical) follow at residues 760–780 (NFFW…MRML) and 781–801 (RCLL…GAAA). Over 802–1218 (YEHTAVMPNK…WSWLKVLVGS (417 aa)) the chain is Extracellular. 8 disulfide bridges follow: cysteine 850/cysteine 915, cysteine 863/cysteine 895, cysteine 864/cysteine 897, cysteine 869/cysteine 879, cysteine 1061/cysteine 1073, cysteine 1103/cysteine 1178, cysteine 1108/cysteine 1182, and cysteine 1130/cysteine 1172. An E1 fusion peptide loop region spans residues 885–902 (VYPFMWGGAYCFCDTENT). A helical membrane pass occupies residues 1219–1239 (TSAFIVLGLIATAVVALVLFT). The Cytoplasmic segment spans residues 1240-1242 (HKH).

As to quaternary structure, part of a tetrameric complex composed of host CRM1, host importin alpha/beta dimer and the viral capsid; this complex blocks the receptor-mediated transport through the nuclear pore. Interacts with host phosphatase PPP1CA; this interaction dephosphorylates the capsid protein, which increases its ability to bind to the viral genome. Interacts with host karyopherin KPNA4; this interaction allows the nuclear import of the viral capsid protein. Interacts with spike glycoprotein E2. Interacts with host IRAK1; the interaction leads to inhibition of IRAK1-dependent signaling. In terms of assembly, the precursor of protein E3/E2 and E1 form a heterodimer shortly after synthesis. The precursor of protein E3/E2 and E1 form a heterodimer shortly after synthesis. Processing of the precursor of protein E3/E2 into E2 and E3 results in a heterodimer of the spike glycoproteins E2 and E1. Spike at virion surface are constituted of three E2-E1 heterodimers. After target cell attachment and endocytosis, E1 change conformation to form homotrimers. Interacts with 6K protein. As to quaternary structure, processing of the precursor of protein E3/E2 into E2 and E3 results in a heterodimer of the spike glycoproteins E2 and E1. Spike at virion surface are constituted of three E2-E1 heterodimers. Interacts with 6K protein. In terms of assembly, interacts with spike glycoprotein E1. Interacts with spike glycoprotein E2. In terms of processing, structural polyprotein: Specific enzymatic cleavages in vivo yield mature proteins. Capsid protein is auto-cleaved during polyprotein translation, unmasking a signal peptide at the N-terminus of the precursor of E3/E2. The remaining polyprotein is then targeted to the host endoplasmic reticulum, where host signal peptidase cleaves it into pE2, 6K and E1 proteins. pE2 is further processed to mature E3 and E2 by host furin in trans-Golgi vesicle. Phosphorylated on serine and threonine residues. Post-translationally, palmitoylated via thioester bonds. These palmitoylations may induce disruption of the C-terminus transmembrane. This would result in the reorientation of E2 C-terminus from lumenal to cytoplasmic side. In terms of processing, N-glycosylated. Palmitoylated via thioester bonds.

It localises to the virion. The protein resides in the host cytoplasm. Its subcellular location is the host cell membrane. It is found in the host nucleus. The protein localises to the virion membrane. It carries out the reaction Autocatalytic release of the core protein from the N-terminus of the togavirus structural polyprotein by hydrolysis of a -Trp-|-Ser- bond.. Its function is as follows. Forms an icosahedral capsid with a T=4 symmetry composed of 240 copies of the capsid protein surrounded by a lipid membrane through which penetrate 80 spikes composed of trimers of E1-E2 heterodimers. The capsid protein binds to the viral RNA genome at a site adjacent to a ribosome binding site for viral genome translation following genome release. Possesses a protease activity that results in its autocatalytic cleavage from the nascent structural protein. Following its self-cleavage, the capsid protein transiently associates with ribosomes, and within several minutes the protein binds to viral RNA and rapidly assembles into icosahedric core particles. The resulting nucleocapsid eventually associates with the cytoplasmic domain of the spike glycoprotein E2 at the cell membrane, leading to budding and formation of mature virions. In case of infection, new virions attach to target cells and after clathrin-mediated endocytosis their membrane fuses with the host endosomal membrane. This leads to the release of the nucleocapsid into the cytoplasm, followed by an uncoating event necessary for the genomic RNA to become accessible. The uncoating might be triggered by the interaction of capsid proteins with ribosomes. Binding of ribosomes would release the genomic RNA since the same region is genomic RNA-binding and ribosome-binding. Specifically inhibits interleukin-1 receptor-associated kinase 1/IRAK1-dependent signaling during viral entry, representing a means by which the alphaviruses may evade innate immune detection and activation prior to viral gene expression. Inhibits host transcription. Forms a tetrameric complex with XPO1/CRM1 and the nuclear import receptor importin. This complex blocks the central channel of host nuclear pores thereby inhibiting the receptor-mediated nuclear transport and thus the host mRNA and rRNA transcription. The inhibition of transcription is linked to a cytopathic effect on the host cell. Provides the signal sequence for the translocation of the precursor of protein E3/E2 to the host endoplasmic reticulum. Furin-cleaved E3 remains associated with spike glycoprotein E1 and mediates pH protection of the latter during the transport via the secretory pathway. After virion release from the host cell, the assembly protein E3 is gradually released in the extracellular space. Functionally, plays a role in viral attachment to target host cell, by binding to the cell receptor. Synthesized as a p62 precursor which is processed by furin at the cell membrane just before virion budding, giving rise to E2-E1 heterodimer. The p62-E1 heterodimer is stable, whereas E2-E1 is unstable and dissociate at low pH. p62 is processed at the last step, presumably to avoid E1 fusion activation before its final export to cell surface. E2 C-terminus contains a transitory transmembrane that would be disrupted by palmitoylation, resulting in reorientation of the C-terminal tail from lumenal to cytoplasmic side. This step is critical since E2 C-terminus is involved in budding by interacting with capsid proteins. This release of E2 C-terminus in cytoplasm occurs lately in protein export, and precludes premature assembly of particles at the endoplasmic reticulum membrane. In terms of biological role, constitutive membrane protein involved in virus glycoprotein processing, cell permeabilization, and the budding of viral particles. Disrupts the calcium homeostasis of the cell, probably at the endoplasmic reticulum level. This leads to cytoplasmic calcium elevation. Because of its lipophilic properties, the 6K protein is postulated to influence the selection of lipids that interact with the transmembrane domains of the glycoproteins, which, in turn, affects the deformability of the bilayer required for the extreme curvature that occurs as budding proceeds. Present in low amount in virions, about 3% compared to viral glycoproteins. Its function is as follows. Class II viral fusion protein. Fusion activity is inactive as long as E1 is bound to E2 in mature virion. After virus attachment to target cell and endocytosis, acidification of the endosome would induce dissociation of E1/E2 heterodimer and concomitant trimerization of the E1 subunits. This E1 trimer is fusion active, and promotes release of viral nucleocapsid in cytoplasm after endosome and viral membrane fusion. Efficient fusion requires the presence of cholesterol and sphingolipid in the target membrane. Fusion is optimal at levels of about 1 molecule of cholesterol per 2 molecules of phospholipids, and is specific for sterols containing a 3-beta-hydroxyl group. In Aedes (Human), this protein is Structural polyprotein.